Here is a 302-residue protein sequence, read N- to C-terminus: tRNA dimethylallyltransferase 2 (302 aa).

An ATP-binding site is contributed by 6 to 13; that stretch reads GPTACGKT. Substrate is bound at residue 8 to 13; the sequence is TACGKT. Interaction with substrate tRNA stretches follow at residues 31–34 and 154–158; these read DSRQ and QRAIR.

The protein belongs to the IPP transferase family. Monomer. It depends on Mg(2+) as a cofactor.

The enzyme catalyses adenosine(37) in tRNA + dimethylallyl diphosphate = N(6)-dimethylallyladenosine(37) in tRNA + diphosphate. Its function is as follows. Catalyzes the transfer of a dimethylallyl group onto the adenine at position 37 in tRNAs that read codons beginning with uridine, leading to the formation of N6-(dimethylallyl)adenosine (i(6)A). The protein is tRNA dimethylallyltransferase 2 of Porphyromonas gingivalis (strain ATCC BAA-308 / W83).